The chain runs to 226 residues: MNENLFASFIAPTILGLPAAVLIILLPPLLIPTSKYLINNRLIATQQWLIQLTSKQMMTMHNAKGRTWSLMLMWLIIFIATTNLLGLLPHSFTPTTQLSMNLAMAIPLWAGAVTTGFRSKTKNALAHLLPQGTPTPLIPMLVIIETISLFIQPMALAVRLTANITAGHLLMHLIGSATLAMSTTNLPSTLIIFTVLILLTMLEIAVALIQAYVFTLLVSLYLHENT.

The next 6 helical transmembrane spans lie at 5–25 (LFASFIAPTILGLPAAVLIIL), 68–88 (WSLMLMWLIIFIATTNLLGLL), 97–117 (QLSMNLAMAIPLWAGAVTTGF), 138–158 (IPMLVIIETISLFIQPMALAV), 160–180 (LTANITAGHLLMHLIGSATLA), and 189–209 (TLIIFTVLILLTMLEIAVALI).

It belongs to the ATPase A chain family. Component of the ATP synthase complex composed at least of ATP5F1A/subunit alpha, ATP5F1B/subunit beta, ATP5MC1/subunit c (homooctomer), MT-ATP6/subunit a, MT-ATP8/subunit 8, ATP5ME/subunit e, ATP5MF/subunit f, ATP5MG/subunit g, ATP5MK/subunit k, ATP5MJ/subunit j, ATP5F1C/subunit gamma, ATP5F1D/subunit delta, ATP5F1E/subunit epsilon, ATP5PF/subunit F6, ATP5PB/subunit b, ATP5PD/subunit d, ATP5PO/subunit OSCP. ATP synthase complex consists of a soluble F(1) head domain (subunits alpha(3) and beta(3)) - the catalytic core - and a membrane F(0) domain - the membrane proton channel (subunits c, a, 8, e, f, g, k and j). These two domains are linked by a central stalk (subunits gamma, delta, and epsilon) rotating inside the F1 region and a stationary peripheral stalk (subunits F6, b, d, and OSCP). Interacts with DNAJC30; interaction is direct.

The protein localises to the mitochondrion inner membrane. It catalyses the reaction H(+)(in) = H(+)(out). Its function is as follows. Subunit a, of the mitochondrial membrane ATP synthase complex (F(1)F(0) ATP synthase or Complex V) that produces ATP from ADP in the presence of a proton gradient across the membrane which is generated by electron transport complexes of the respiratory chain. ATP synthase complex consist of a soluble F(1) head domain - the catalytic core - and a membrane F(1) domain - the membrane proton channel. These two domains are linked by a central stalk rotating inside the F(1) region and a stationary peripheral stalk. During catalysis, ATP synthesis in the catalytic domain of F(1) is coupled via a rotary mechanism of the central stalk subunits to proton translocation. With the subunit c (ATP5MC1), forms the proton-conducting channel in the F(0) domain, that contains two crucial half-channels (inlet and outlet) that facilitate proton movement from the mitochondrial intermembrane space (IMS) into the matrix. Protons are taken up via the inlet half-channel and released through the outlet half-channel, following a Grotthuss mechanism. This is ATP synthase F(0) complex subunit a from Gorilla gorilla gorilla (Western lowland gorilla).